The primary structure comprises 564 residues: Kelch repeat and BTB domain-containing protein 1 (564 aa).

The 68-residue stretch at Cys21–Asn88 folds into the BTB domain. Residues Cys123–Ser219 form the BACK domain. Kelch repeat units lie at residues Ile252–Asn297, Ile298–Glu346, Tyr347–Gly395, Ile397–Gly441, and Lys442–Asn492.

As to quaternary structure, interacts (via BTB domain) with host CUL3.

Its subcellular location is the host cytoplasm. Its function is as follows. Probable substrate-specific adapter of CUL3-containing E3 ubiquitin-protein ligases which mediate the ubiquitination and subsequent proteasomal degradation of host target proteins. The chain is Kelch repeat and BTB domain-containing protein 1 (KBTB1) from Bos taurus (Bovine).